Reading from the N-terminus, the 234-residue chain is Small ribosomal subunit protein uS3 (234 aa).

The 69-residue stretch at 39–107 (IRKFLKKELY…EVSINIKEVK (69 aa)) folds into the KH type-2 domain.

Belongs to the universal ribosomal protein uS3 family. Part of the 30S ribosomal subunit. Forms a tight complex with proteins S10 and S14.

Functionally, binds the lower part of the 30S subunit head. Binds mRNA in the 70S ribosome, positioning it for translation. The sequence is that of Small ribosomal subunit protein uS3 from Helicobacter acinonychis (strain Sheeba).